We begin with the raw amino-acid sequence, 244 residues long: HTH-type transcriptional regulator RdgA (244 aa).

One can recognise an HTH cro/C1-type domain in the interval 9-62 (LKTARTAQGLSQKALGDMIGVSQAAIQKIEVGKASQTTKIVELSNNLRVRPEWL). The segment at residues 20 to 39 (QKALGDMIGVSQAAIQKIEV) is a DNA-binding region (H-T-H motif).

Functionally, regulates pectin lyase production in response to DNA damage. This chain is HTH-type transcriptional regulator RdgA (rdgA), found in Pectobacterium carotovorum subsp. carotovorum (Erwinia carotovora subsp. carotovora).